An 852-amino-acid chain; its full sequence is Vacuolar protein sorting-associated protein 16 homolog (852 aa).

The protein belongs to the VPS16 family. In terms of assembly, probable core component of at least two putative endosomal tethering complexes, the homotypic fusion and vacuole protein sorting (HOPS) complex and the class C core vacuole/endosome tethering (CORVET) complex. Their common core is composed of the class C Vps proteins vps-11, vps-16 and vps-18, which in HOPS further associates with vps-33.1, vps-39 and vps-41 and in CORVET with vps-8 and vps-33.2.

The protein localises to the late endosome membrane. It localises to the lysosome membrane. Functionally, plays a role in vesicle-mediated protein trafficking to lysosomal compartments including the endocytic membrane transport pathways. Believed to act as a core component of the putative HOPS and CORVET endosomal tethering complexes which are proposed to be involved in the rab-5-to-rab-7 endosome conversion probably implicating sand-1, and via binding SNAREs and SNARE complexes to mediate tethering and docking events during SNARE-mediated membrane fusion. The HOPS complex is proposed to be recruited to rab-7 on the late endosomal membrane and to regulate late endocytic, phagocytic and autophagic traffic towards lysosomes. Within the HOPS complex, contributes to the normal development of gut granules in the adult intestine. The CORVET complex is proposed to function as a rab-5 effector to mediate early endosome fusion probably in specific endosome subpopulations. Required for recruitment of vps-33.1 to the HOPS complex. Required for fusion of endosomes and autophagosomes with lysosomes; the function is dependent on its association with vps-33.1 but not vps-33.2. The protein is Vacuolar protein sorting-associated protein 16 homolog of Caenorhabditis elegans.